Here is a 228-residue protein sequence, read N- to C-terminus: Sliding clamp (228 aa).

It belongs to the Tevenvirinae sliding clamp family. In terms of assembly, homotrimer. Interacts with the viral DNA polymerase; this interaction constitutes the polymerase holoenzyme. Interacts with the sliding-clamp-loader; this interaction allows the sliding-clamp-loader to open the sliding clamp. Interacts with the viral DNA ligase. Part of the replicase complex that includes the DNA polymerase, the polymerase clamp, the clamp loader complex, the single-stranded DNA binding protein, the primase, the helicase and the helicase assembly factor. Interacts with the viral RNA polymerase (RNAP). Part of the transcription activation complex containing host RNAP, the viral RNA polymerase sigma-like factor, the late transcription coactivator, and the sliding clamp.

In terms of biological role, sliding clamp that encircles the genomic DNA and links the DNA polymerase to the template to control the processivity of DNA synthesis. Responsible for tethering the catalytic subunit of DNA polymerase to DNA during high-speed replication. Interaction with the sliding-clamp-loader opens the sliding clamp so that it can be loaded around the DNA template. During transcription, encircles the DNA and tethers host RNA polymerase (RNAP) to it. The sequence is that of Sliding clamp (45) from Escherichia coli (Bacteriophage RB69).